The primary structure comprises 632 residues: Biosynthetic arginine decarboxylase (632 aa).

Residue Lys-101 is modified to N6-(pyridoxal phosphate)lysine. Residue 281 to 291 (FDVGGGLGVDY) coordinates substrate.

Belongs to the Orn/Lys/Arg decarboxylase class-II family. SpeA subfamily. The cofactor is Mg(2+). Pyridoxal 5'-phosphate serves as cofactor.

It catalyses the reaction L-arginine + H(+) = agmatine + CO2. Its pathway is amine and polyamine biosynthesis; agmatine biosynthesis; agmatine from L-arginine: step 1/1. Its function is as follows. Catalyzes the biosynthesis of agmatine from arginine. The protein is Biosynthetic arginine decarboxylase of Klebsiella pneumoniae (strain 342).